Reading from the N-terminus, the 238-residue chain is ATP synthase subunit a (238 aa).

A run of 6 helical transmembrane segments spans residues 18–38 (TTNLISGLVSALIVFCVVFAL), 76–96 (FGLYAFTLFLFIFVSNQIGLF), 114–134 (PIVTLTLSLITMMLAHYSGVA), 150–170 (FKVWLPIGVFTEFIDFLTLGL), 188–208 (GIAFSGGIVNMIVAIPLALIW), and 211–231 (FSVFLGSIQAFVFVTLTSVYI).

It belongs to the ATPase A chain family. In terms of assembly, F-type ATPases have 2 components, CF(1) - the catalytic core - and CF(0) - the membrane proton channel. CF(1) has five subunits: alpha(3), beta(3), gamma(1), delta(1), epsilon(1). CF(0) has three main subunits: a(1), b(2) and c(9-12). The alpha and beta chains form an alternating ring which encloses part of the gamma chain. CF(1) is attached to CF(0) by a central stalk formed by the gamma and epsilon chains, while a peripheral stalk is formed by the delta and b chains.

The protein localises to the cell membrane. In terms of biological role, key component of the proton channel; it plays a direct role in the translocation of protons across the membrane. This Pediococcus pentosaceus (strain ATCC 25745 / CCUG 21536 / LMG 10740 / 183-1w) protein is ATP synthase subunit a.